Consider the following 182-residue polypeptide: Probable RNA 2'-phosphotransferase (182 aa).

The protein belongs to the KptA/TPT1 family.

Removes the 2'-phosphate from RNA via an intermediate in which the phosphate is ADP-ribosylated by NAD followed by a presumed transesterification to release the RNA and generate ADP-ribose 1''-2''-cyclic phosphate (APPR&gt;P). May function as an ADP-ribosylase. The sequence is that of Probable RNA 2'-phosphotransferase from Pseudomonas fluorescens (strain ATCC BAA-477 / NRRL B-23932 / Pf-5).